We begin with the raw amino-acid sequence, 309 residues long: Elongation factor Ts (309 aa).

An involved in Mg(2+) ion dislocation from EF-Tu region spans residues 82–85 (TDFV).

This sequence belongs to the EF-Ts family.

It is found in the cytoplasm. Functionally, associates with the EF-Tu.GDP complex and induces the exchange of GDP to GTP. It remains bound to the aminoacyl-tRNA.EF-Tu.GTP complex up to the GTP hydrolysis stage on the ribosome. In Rickettsia peacockii (strain Rustic), this protein is Elongation factor Ts.